The chain runs to 391 residues: Phosphoglycerate kinase (391 aa).

Residues 21 to 23, Arg36, 59 to 62, Arg113, and Arg146 each bind substrate; these read DLN and HLGR. ATP is bound by residues Lys197, Glu319, and 345–348; that span reads GGDT.

The protein belongs to the phosphoglycerate kinase family. In terms of assembly, monomer.

Its subcellular location is the cytoplasm. The enzyme catalyses (2R)-3-phosphoglycerate + ATP = (2R)-3-phospho-glyceroyl phosphate + ADP. It functions in the pathway carbohydrate degradation; glycolysis; pyruvate from D-glyceraldehyde 3-phosphate: step 2/5. This chain is Phosphoglycerate kinase, found in Shewanella baltica (strain OS185).